The chain runs to 480 residues: Protein nucleotidyltransferase YdiU (480 aa).

ATP-binding residues include Gly86, Gly88, Arg89, Lys109, Asp121, Gly122, Arg172, and Arg179. Asp248 serves as the catalytic Proton acceptor. Residues Asn249 and Asp258 each contribute to the Mg(2+) site. Asp258 is an ATP binding site.

Belongs to the SELO family. Requires Mg(2+) as cofactor. The cofactor is Mn(2+).

It catalyses the reaction L-seryl-[protein] + ATP = 3-O-(5'-adenylyl)-L-seryl-[protein] + diphosphate. The enzyme catalyses L-threonyl-[protein] + ATP = 3-O-(5'-adenylyl)-L-threonyl-[protein] + diphosphate. It carries out the reaction L-tyrosyl-[protein] + ATP = O-(5'-adenylyl)-L-tyrosyl-[protein] + diphosphate. The catalysed reaction is L-histidyl-[protein] + UTP = N(tele)-(5'-uridylyl)-L-histidyl-[protein] + diphosphate. It catalyses the reaction L-seryl-[protein] + UTP = O-(5'-uridylyl)-L-seryl-[protein] + diphosphate. The enzyme catalyses L-tyrosyl-[protein] + UTP = O-(5'-uridylyl)-L-tyrosyl-[protein] + diphosphate. Functionally, nucleotidyltransferase involved in the post-translational modification of proteins. It can catalyze the addition of adenosine monophosphate (AMP) or uridine monophosphate (UMP) to a protein, resulting in modifications known as AMPylation and UMPylation. This is Protein nucleotidyltransferase YdiU from Salmonella paratyphi B (strain ATCC BAA-1250 / SPB7).